The primary structure comprises 38 residues: Photosystem II reaction center protein L (38 aa).

Residues 17–37 traverse the membrane as a helical segment; the sequence is SLFWGLLLIFVLAILFSSYIF.

This sequence belongs to the PsbL family. PSII is composed of 1 copy each of membrane proteins PsbA, PsbB, PsbC, PsbD, PsbE, PsbF, PsbH, PsbI, PsbJ, PsbK, PsbL, PsbM, PsbT, PsbX, PsbY, PsbZ, Psb30/Ycf12, at least 3 peripheral proteins of the oxygen-evolving complex and a large number of cofactors. It forms dimeric complexes.

The protein localises to the plastid. Its subcellular location is the cyanelle thylakoid membrane. Its function is as follows. One of the components of the core complex of photosystem II (PSII). PSII is a light-driven water:plastoquinone oxidoreductase that uses light energy to abstract electrons from H(2)O, generating O(2) and a proton gradient subsequently used for ATP formation. It consists of a core antenna complex that captures photons, and an electron transfer chain that converts photonic excitation into a charge separation. This subunit is found at the monomer-monomer interface and is required for correct PSII assembly and/or dimerization. The protein is Photosystem II reaction center protein L of Cyanophora paradoxa.